A 481-amino-acid polypeptide reads, in one-letter code: MTMRRLMTWLFGAFLLLLREDAFALGLLDGYHLALENDPQFQAAIQEHEAGRQYRALGRAALLPRLVYSYNRGRSWSDVTQTTTRGDFKEDRDYDSYVSTLSLQQPLFDYEAFSRYRKGVAQALLSDERFRSQSQELLVRVLEAYTGALLAQDQIELARAQKRSYREQFQLNQRQFERGNGTRTDTLETQARFNLAQAQEIEARDSQDAALRELERLVGAPLEIADLAPLGERFQVRPLSPASYTAWRDLALAENPELASLRHAVDVARYEVEQNRADFLPRLGLYASTGKSKSGSENTYNQRYETDSVGIQLSVPLFSGGETLAATRQATHRMEKSHYDLDDKVRETLNQVRKMYNQSSSSAAKIRAYEMTVDSARTLVMATRKSIAAGVRVNLDLLNAEQALYSAMNELSKAKYDYLTAWARLRFYAGVLDEADLELVAANFVSGETPARRRDCATTDCPAPLHTLSKTDTEENRSALN.

Residues 462 to 481 (PAPLHTLSKTDTEENRSALN) are disordered. Residues 469–481 (SKTDTEENRSALN) show a composition bias toward basic and acidic residues.

The protein belongs to the outer membrane factor (OMF) (TC 1.B.17) family.

It is found in the cell outer membrane. Involved in the secretion of alkaline protease. This chain is Alkaline protease secretion protein AprF (aprF), found in Pseudomonas aeruginosa (strain ATCC 15692 / DSM 22644 / CIP 104116 / JCM 14847 / LMG 12228 / 1C / PRS 101 / PAO1).